The primary structure comprises 156 residues: 6,7-dimethyl-8-ribityllumazine synthase (156 aa).

Residues Phe-23, 57–59, and 81–83 contribute to the 5-amino-6-(D-ribitylamino)uracil site; these read AFE and AVI. Residue 86–87 coordinates (2S)-2-hydroxy-3-oxobutyl phosphate; sequence ST. The Proton donor role is filled by His-89. 5-amino-6-(D-ribitylamino)uracil is bound at residue Phe-114. Arg-128 is a binding site for (2S)-2-hydroxy-3-oxobutyl phosphate.

The protein belongs to the DMRL synthase family.

It carries out the reaction (2S)-2-hydroxy-3-oxobutyl phosphate + 5-amino-6-(D-ribitylamino)uracil = 6,7-dimethyl-8-(1-D-ribityl)lumazine + phosphate + 2 H2O + H(+). It functions in the pathway cofactor biosynthesis; riboflavin biosynthesis; riboflavin from 2-hydroxy-3-oxobutyl phosphate and 5-amino-6-(D-ribitylamino)uracil: step 1/2. Catalyzes the formation of 6,7-dimethyl-8-ribityllumazine by condensation of 5-amino-6-(D-ribitylamino)uracil with 3,4-dihydroxy-2-butanone 4-phosphate. This is the penultimate step in the biosynthesis of riboflavin. The protein is 6,7-dimethyl-8-ribityllumazine synthase of Campylobacter fetus subsp. fetus (strain 82-40).